Consider the following 295-residue polypeptide: Ethanolamine ammonia-lyase small subunit (295 aa).

Val-207, Glu-228, and Cys-258 together coordinate adenosylcob(III)alamin.

Belongs to the EutC family. In terms of assembly, the basic unit is a heterodimer which dimerizes to form tetramers. The heterotetramers trimerize; 6 large subunits form a core ring with 6 small subunits projecting outwards. Adenosylcob(III)alamin serves as cofactor.

It localises to the bacterial microcompartment. It catalyses the reaction ethanolamine = acetaldehyde + NH4(+). Its pathway is amine and polyamine degradation; ethanolamine degradation. Its function is as follows. Catalyzes the deamination of various vicinal amino-alcohols to oxo compounds. Allows this organism to utilize ethanolamine as the sole source of nitrogen and carbon in the presence of external vitamin B12. The protein is Ethanolamine ammonia-lyase small subunit of Escherichia fergusonii (strain ATCC 35469 / DSM 13698 / CCUG 18766 / IAM 14443 / JCM 21226 / LMG 7866 / NBRC 102419 / NCTC 12128 / CDC 0568-73).